Consider the following 343-residue polypeptide: Aspartate carbamoyltransferase catalytic subunit (343 aa).

Carbamoyl phosphate-binding residues include R91 and T92. K119 lines the L-aspartate pocket. Carbamoyl phosphate is bound by residues R141, H171, and Q174. 2 residues coordinate L-aspartate: R204 and R259. Carbamoyl phosphate contacts are provided by G300 and P301.

It belongs to the aspartate/ornithine carbamoyltransferase superfamily. ATCase family. As to quaternary structure, heterododecamer (2C3:3R2) of six catalytic PyrB chains organized as two trimers (C3), and six regulatory PyrI chains organized as three dimers (R2).

The catalysed reaction is carbamoyl phosphate + L-aspartate = N-carbamoyl-L-aspartate + phosphate + H(+). Its pathway is pyrimidine metabolism; UMP biosynthesis via de novo pathway; (S)-dihydroorotate from bicarbonate: step 2/3. Catalyzes the condensation of carbamoyl phosphate and aspartate to form carbamoyl aspartate and inorganic phosphate, the committed step in the de novo pyrimidine nucleotide biosynthesis pathway. The chain is Aspartate carbamoyltransferase catalytic subunit from Burkholderia multivorans (strain ATCC 17616 / 249).